We begin with the raw amino-acid sequence, 372 residues long: Flagellar P-ring protein (372 aa).

A signal peptide spans 1–26; it reads MNLSSLSFRLLATLLGACVVVAPASA.

This sequence belongs to the FlgI family. The basal body constitutes a major portion of the flagellar organelle and consists of four rings (L,P,S, and M) mounted on a central rod.

It is found in the periplasm. Its subcellular location is the bacterial flagellum basal body. Assembles around the rod to form the L-ring and probably protects the motor/basal body from shearing forces during rotation. This Xanthomonas oryzae pv. oryzae (strain MAFF 311018) protein is Flagellar P-ring protein.